Consider the following 280-residue polypeptide: Diaminopimelate epimerase (280 aa).

Substrate is bound by residues asparagine 11 and asparagine 62. The Proton donor role is filled by cysteine 71. Substrate-binding positions include 72–73, asparagine 160, asparagine 193, and 211–212; these read GN and ER. The active-site Proton acceptor is the cysteine 220. 221–222 serves as a coordination point for substrate; the sequence is GT.

Belongs to the diaminopimelate epimerase family. Homodimer.

Its subcellular location is the cytoplasm. It catalyses the reaction (2S,6S)-2,6-diaminopimelate = meso-2,6-diaminopimelate. The protein operates within amino-acid biosynthesis; L-lysine biosynthesis via DAP pathway; DL-2,6-diaminopimelate from LL-2,6-diaminopimelate: step 1/1. Functionally, catalyzes the stereoinversion of LL-2,6-diaminopimelate (L,L-DAP) to meso-diaminopimelate (meso-DAP), a precursor of L-lysine and an essential component of the bacterial peptidoglycan. The polypeptide is Diaminopimelate epimerase (Acetivibrio thermocellus (strain ATCC 27405 / DSM 1237 / JCM 9322 / NBRC 103400 / NCIMB 10682 / NRRL B-4536 / VPI 7372) (Clostridium thermocellum)).